We begin with the raw amino-acid sequence, 296 residues long: Elongation factor Ts (296 aa).

The tract at residues 79–82 (TDFV) is involved in Mg(2+) ion dislocation from EF-Tu.

Belongs to the EF-Ts family.

It localises to the cytoplasm. Associates with the EF-Tu.GDP complex and induces the exchange of GDP to GTP. It remains bound to the aminoacyl-tRNA.EF-Tu.GTP complex up to the GTP hydrolysis stage on the ribosome. The polypeptide is Elongation factor Ts (tsf) (Spiroplasma citri).